Consider the following 383-residue polypeptide: MRSTVSVIKADIGSLAGHHVVHPDTMAAANRVLAEAKRQGIILDYYITNVGDDLELIMSHTRGELDTKVHETAWDAFKEATKVSKELGLYAAGQDLLSDSFSGNLKGMGPGIAELDIEERPSEPIAIFMADKTEPGAFNLPLYKMFADPFNTAGLVIDPTMNEGFKFEVLDVYEGQSVVLNSPEEMYSLLGLIGTPARYVIRRVYRKADNMIGSVTSIERLNLIAGKYVGKDDPVLIVRLQHGFPALGEALEAFSFPYLVPGWMRGSHYGPIMPVSQRDAKATRFDGPPRLIGLGFNVKNGKLTGPSDLFDDPAFDETRRMASVITDYMRRHGPFMPHRLEPTEMEYTTLPTLIEKLKPRFKKEEDVKKAKPSVYTSKDQGMD.

Aspartate 11 (proton acceptor; for FBP phosphatase activity) is an active-site residue. Residues aspartate 11, histidine 18, aspartate 52, and aspartate 53 each coordinate Mg(2+). Beta-D-fructose 1,6-bisphosphate is bound at residue histidine 18. Histidine 18 lines the dihydroxyacetone phosphate pocket. Residue tyrosine 90 participates in beta-D-fructose 1,6-bisphosphate binding. Position 94 (glutamine 94) interacts with Mg(2+). A beta-D-fructose 1,6-bisphosphate-binding site is contributed by 103-104 (GN). Mg(2+) is bound at residue aspartate 131. Residue lysine 132 coordinates beta-D-fructose 1,6-bisphosphate. Lysine 132 contacts dihydroxyacetone phosphate. The active-site Proton donor/acceptor; for FBP aldolase activity is tyrosine 228. Residues lysine 231, aspartate 232, and aspartate 233 each coordinate Mg(2+). Lysine 231 functions as the Schiff-base intermediate with DHAP; for FBP aldolase activity in the catalytic mechanism. Beta-D-fructose 1,6-bisphosphate-binding positions include 241–242 (QH), arginine 265, aspartate 286, and tyrosine 347. Dihydroxyacetone phosphate is bound by residues arginine 265 and aspartate 286. A disordered region spans residues 361–383 (FKKEEDVKKAKPSVYTSKDQGMD). Polar residues predominate over residues 374–383 (VYTSKDQGMD).

The protein belongs to the FBP aldolase/phosphatase family. Homooctamer; dimer of tetramers. Requires Mg(2+) as cofactor.

The enzyme catalyses beta-D-fructose 1,6-bisphosphate + H2O = beta-D-fructose 6-phosphate + phosphate. It catalyses the reaction beta-D-fructose 1,6-bisphosphate = D-glyceraldehyde 3-phosphate + dihydroxyacetone phosphate. Its pathway is carbohydrate biosynthesis; gluconeogenesis. Catalyzes two subsequent steps in gluconeogenesis: the aldol condensation of dihydroxyacetone phosphate (DHAP) and glyceraldehyde-3-phosphate (GA3P) to fructose-1,6-bisphosphate (FBP), and the dephosphorylation of FBP to fructose-6-phosphate (F6P). The polypeptide is Fructose-1,6-bisphosphate aldolase/phosphatase (Metallosphaera sedula (strain ATCC 51363 / DSM 5348 / JCM 9185 / NBRC 15509 / TH2)).